A 414-amino-acid chain; its full sequence is NADH-dependent flavin oxidoreductase iccE (414 aa).

FMN contacts are provided by residues 25 to 28 (TAIA) and Q107. 188 to 191 (HASH) contributes to the substrate binding site. 347–348 (AR) serves as a coordination point for FMN.

Belongs to the NADH:flavin oxidoreductase/NADH oxidase family.

The catalysed reaction is 8-epi-ilicicolin H = ilicicolin H. It participates in mycotoxin biosynthesis. In terms of biological role, NADH-dependent flavin oxidoreductase; part of the gene cluster that mediates the biosynthesis of ilicicolin H, a 4-hydroxy-2-pyridonealkaloid that has potent and broad antifungal activities by inhibiting the mitochondrial respiration chain. IccE acts as an epimerase and catalyzes the conversion of 8-epi-ilicicolin H into the final product ilicicolin H. The biosynthesis of ilicicolin H starts with formation of the tetramic acid by the hybrid PKS-NRPS synthetase iccA with the partnering trans-enoyl reductase iccB since iccA lacks a designated enoylreductase (ER) domain. The cytochrome P450 monooxygenase iccC then catalyzes the ring expansion of the tetramate to the acyclic 2-pyridone. The pericyclase iccD further converts the acyclic 2-pyridone into 8-epi-ilicicolin H. Finally, the epimerase iccE converts 8-epi-ilicicolin H into ilicicolin H via epimerization. IccA to iccE are sufficient for ilicicolin H biosynthesis and the roles of the remaining enzymes, iccF, iccG and iccH within the pathway have still to be determined. This is NADH-dependent flavin oxidoreductase iccE from Talaromyces variabilis (Penicillium variabile).